A 145-amino-acid chain; its full sequence is Large ribosomal subunit protein uL16 (145 aa).

Basic residues predominate over residues 1–17 (MLMPKRVKHRRVHRGRM). Residues 1–22 (MLMPKRVKHRRVHRGRMTGKAT) form a disordered region.

The protein belongs to the universal ribosomal protein uL16 family. As to quaternary structure, part of the 50S ribosomal subunit.

Functionally, binds 23S rRNA and is also seen to make contacts with the A and possibly P site tRNAs. The chain is Large ribosomal subunit protein uL16 from Ruminiclostridium cellulolyticum (strain ATCC 35319 / DSM 5812 / JCM 6584 / H10) (Clostridium cellulolyticum).